We begin with the raw amino-acid sequence, 383 residues long: Microtubule-associated protein tau (383 aa).

Residues 1–27 (MAEPRQEFDVMEDHAGTYGLGDRKDQE) are compositionally biased toward basic and acidic residues. Residues 1-198 (MAEPRQEFDV…PVPMPDLKNV (198 aa)) form a disordered region. Position 2 is an N-acetylalanine (A2). Phosphotyrosine occurs at positions 18 and 29. A Glycyl lysine isopeptide (Lys-Gly) (interchain with G-Cter in ubiquitin) cross-link involves residue K44. At T53 the chain carries Phosphothreonine. Over residues 72-91 (KSKDGTGSDDKKAKGADGKT) the composition is skewed to basic and acidic residues. A Phosphothreonine modification is found at T95. R97 carries the omega-N-methylarginine modification. K105 carries the N6,N6-dimethyllysine; alternate modification. At K105 the chain carries N6-acetyllysine; alternate. T111, T117, and T123 each carry phosphothreonine. The span at 116–128 (KTPPAPKTPPSSG) shows a compositional bias: pro residues. Phosphoserine is present on residues S127, S133, and S137. The segment covering 129–156 (EPPKSGDRSGYSSPGSPGTPGSRSRTPS) has biased composition (low complexity). Phosphotyrosine is present on Y139. A phosphoserine mark is found at S140, S141, and S144. Phosphothreonine is present on residues T147 and T154. At S156 the chain carries Phosphoserine. The residue at position 159 (T159) is a Phosphothreonine. K167 is modified (N6-acetyllysine). T173 is subject to Phosphothreonine. 2 positions are modified to phosphoserine: S177 and S179. Tau/MAP repeat units follow at residues 186-216 (QTAP…GGGK), 217-247 (VQII…GGGS), 248-278 (VQIV…GGGQ), and 279-310 (VEVK…GGGN). A Glycyl lysine isopeptide (Lys-Gly) (interchain with G-Cter in ubiquitin) cross-link involves residue K196. Position 201 is an N6-acetyllysine; alternate (K201). K201 carries the N6-methyllysine; alternate modification. Residue K201 forms a Glycyl lysine isopeptide (Lys-Gly) (interchain with G-Cter in ubiquitin); alternate linkage. Position 204 is a phosphoserine (S204). Residue K209 forms a Glycyl lysine isopeptide (Lys-Gly) (interchain with G-Cter in ubiquitin) linkage. The residue at position 223 (K223) is an N6-acetyllysine; alternate. K223 participates in a covalent cross-link: Glycyl lysine isopeptide (Lys-Gly) (interchain with G-Cter in ubiquitin); alternate. Phosphoserine occurs at positions 227 and 231. K232 is modified (N6-acetyllysine). An intrachain disulfide couples C233 to C264. The residue at position 235 (S235) is a Phosphoserine. K240 is modified (N6-acetyllysine; alternate). Residue K240 forms a Glycyl lysine isopeptide (Lys-Gly) (interchain with G-Cter in ubiquitin); alternate linkage. Residue S247 is modified to Phosphoserine. K253 carries the N6,N6-dimethyllysine; alternate modification. K253, K259, and K263 each carry N6-acetyllysine; alternate. Glycyl lysine isopeptide (Lys-Gly) (interchain with G-Cter in ubiquitin); alternate cross-links involve residues K253, K259, and K263. S266 is modified (phosphoserine). K273, K285, and K289 each carry N6-acetyllysine; alternate. Glycyl lysine isopeptide (Lys-Gly) (interchain with G-Cter in ubiquitin); alternate cross-links involve residues K273, K285, and K289. Position 291 is an omega-N-methylarginine (R291). Phosphoserine is present on S294. A Glycyl lysine isopeptide (Lys-Gly) (interchain with G-Cter in ubiquitin) cross-link involves residue K295. S298 bears the Phosphoserine mark. K311 is modified (N6-acetyllysine; alternate). K311 is covalently cross-linked (Glycyl lysine isopeptide (Lys-Gly) (interchain with G-Cter in ubiquitin); alternate). Residue K317 forms a Glycyl lysine isopeptide (Lys-Gly) (interchain with G-Cter in ubiquitin) linkage. K327 carries the post-translational modification N6-acetyllysine; alternate. K327 is covalently cross-linked (Glycyl lysine isopeptide (Lys-Gly) (interchain with G-Cter in ubiquitin); alternate). Y336 is modified (phosphotyrosine). Residues S338 and S342 each carry the phosphoserine modification. The disordered stretch occupies residues 340-359 (VVSGDTSPRHLSNVSSTGSI). Residues 343 to 358 (GDTSPRHLSNVSSTGS) are compositionally biased toward polar residues. T345 is subject to Phosphothreonine. 4 positions are modified to phosphoserine: S346, S351, S358, and S364. T369 bears the Phosphothreonine mark.

Interacts with MARK1, MARK2, MARK3 and MARK4. Interacts with SQSTM1 when polyubiquitinated. Interacts with PSMC2 through SQSTM1. Interacts with FKBP4. Binds to CSNK1D. Interacts with SGK1. Interacts with PIN1. Interacts with LRRK2. Interacts with LRP1, leading to endocytosis; this interaction is reduced in the presence of LRPAP1/RAP. Polyubiquitinated. Requires functional TRAF6 and may provoke SQSTM1-dependent degradation by the proteasome. In terms of processing, phosphorylation at various serine and threonine residues in S-P or T-P motifs by proline-directed protein kinases (PDPK1, CDK1, CDK5, GSK3, MAPK) (a few sites per protein in interphase, more in mitosis), and at serine residues in K-X-G-S motifs by MAP/microtubule affinity-regulating kinase (MARK1, MARK2, MARK3 or MARK4), causing detachment from microtubules, and their disassembly. Phosphorylation at Ser-204 by BRSK1 and BRSK2 in neurons affects ability to bind microtubules and plays a role in neuron polarization. Phosphorylated by PHK. Dephosphorylation at several serine and threonine residues by the serine/threonine phosphatase PPP5C. As to expression, expressed in neurons.

The protein localises to the cytoplasm. Its subcellular location is the cytosol. The protein resides in the cell membrane. It is found in the cytoskeleton. It localises to the cell projection. The protein localises to the axon. Its subcellular location is the dendrite. In terms of biological role, promotes microtubule assembly and stability, and might be involved in the establishment and maintenance of neuronal polarity. The C-terminus binds axonal microtubules while the N-terminus binds neural plasma membrane components, suggesting that tau functions as a linker protein between both. Axonal polarity is predetermined by tau localization (in the neuronal cell) in the domain of the cell body defined by the centrosome. This is Microtubule-associated protein tau (MAPT) from Papio hamadryas (Hamadryas baboon).